Consider the following 317-residue polypeptide: Olfactory receptor 8B3 (317 aa).

The Extracellular segment spans residues 1-32 (MISMLAGNGSSVTEFVLAGLTDRPELQLPLFY). Asparagine 8 carries an N-linked (GlcNAc...) asparagine glycan. A helical membrane pass occupies residues 33–53 (LFLIIYIITVVGNLGLIILIG). Topologically, residues 54-59 (LNPHLH) are cytoplasmic. A helical membrane pass occupies residues 60–80 (TPMYYFLFNLSFIDLCYSSVF). Over 81–97 (SPKMLINFVSEKNSISY) the chain is Extracellular. Residues 98 to 118 (AGCMTQLFLFLFFVISECYML) form a helical membrane-spanning segment. Residues 119 to 136 (TSMAYDRYVAICNPLLYK) lie on the Cytoplasmic side of the membrane. The chain crosses the membrane as a helical span at residues 137–157 (VTMSPQICSVISFAAYGMGFA). Residues 158–199 (GSSAHTGCMLRLTFCNVNVINHYLCDILPLLQLSCTSTYVNE) are Extracellular-facing. The helical transmembrane segment at 200–220 (VVVLIVVGINITVPSFTILIS) threads the bilayer. Residues 221–242 (YVFILANILNIKSTQGRAKAFS) are Cytoplasmic-facing. Residues 243–263 (TCSSHIMAISLFFGSAAFMYL) traverse the membrane as a helical segment. The Extracellular portion of the chain corresponds to 264–274 (KYSSGSMEQGK). A helical transmembrane segment spans residues 275-294 (ISSVFYTNVGPMLNPLIYSL). Residues 295–317 (RNKDVKVALRKSLIKFREKTDFN) are Cytoplasmic-facing.

It belongs to the G-protein coupled receptor 1 family.

Its subcellular location is the cell membrane. In terms of biological role, odorant receptor. The polypeptide is Olfactory receptor 8B3 (Mus musculus (Mouse)).